The primary structure comprises 544 residues: Propane 2-monooxygenase, hydroxylase component large subunit (544 aa).

Fe cation is bound by residues Glu-97, Glu-127, His-130, Glu-192, Glu-226, and His-229.

Belongs to the TmoA/XamoA family. In terms of assembly, the propane 2-monooxygenase multicomponent enzyme system is composed of an electron transfer component and a monooxygenase component interacting with the effector protein PrmD. The electron transfer component is composed of a reductase (PrmB), and the monooxygenase component is formed by a large subunit (PrmA) and a small subunit (PrmC). Probably requires the presence of the chaperonin-like protein PrmG to ensure a productive folding, resulting of a soluble PrmA, which leads to the active form of PrmABCD. Fe(2+) serves as cofactor.

It catalyses the reaction propane + NADH + O2 + H(+) = propan-2-ol + NAD(+) + H2O. Component of the propane 2-monooxygenase multicomponent enzyme system which is involved in the degradation of propane via the O2-dependent hydroxylation of propane. Also able to catalyze the oxidation the water contaminant N-nitrosodimethylamine (NDMA). This is Propane 2-monooxygenase, hydroxylase component large subunit from Rhodococcus jostii (strain RHA1).